The primary structure comprises 341 residues: Ketol-acid reductoisomerase (NADP(+)) (341 aa).

Residues 2-181 (AKVYYNGDVN…GAARAGVLET (180 aa)) enclose the KARI N-terminal Rossmann domain. NADP(+) is bound by residues 25-28 (YGSQ), Arg48, Ser52, and 82-85 (DEHQ). Residue His107 is part of the active site. Gly133 serves as a coordination point for NADP(+). Residues 182–327 (TFKEETETDL…RELREMMPFV (146 aa)) enclose the KARI C-terminal knotted domain. Positions 190, 194, 226, and 230 each coordinate Mg(2+). Ser251 contributes to the substrate binding site.

The protein belongs to the ketol-acid reductoisomerase family. It depends on Mg(2+) as a cofactor.

It catalyses the reaction (2R)-2,3-dihydroxy-3-methylbutanoate + NADP(+) = (2S)-2-acetolactate + NADPH + H(+). The enzyme catalyses (2R,3R)-2,3-dihydroxy-3-methylpentanoate + NADP(+) = (S)-2-ethyl-2-hydroxy-3-oxobutanoate + NADPH + H(+). It functions in the pathway amino-acid biosynthesis; L-isoleucine biosynthesis; L-isoleucine from 2-oxobutanoate: step 2/4. The protein operates within amino-acid biosynthesis; L-valine biosynthesis; L-valine from pyruvate: step 2/4. Functionally, involved in the biosynthesis of branched-chain amino acids (BCAA). Catalyzes an alkyl-migration followed by a ketol-acid reduction of (S)-2-acetolactate (S2AL) to yield (R)-2,3-dihydroxy-isovalerate. In the isomerase reaction, S2AL is rearranged via a Mg-dependent methyl migration to produce 3-hydroxy-3-methyl-2-ketobutyrate (HMKB). In the reductase reaction, this 2-ketoacid undergoes a metal-dependent reduction by NADPH to yield (R)-2,3-dihydroxy-isovalerate. The sequence is that of Ketol-acid reductoisomerase (NADP(+)) from Shouchella clausii (strain KSM-K16) (Alkalihalobacillus clausii).